The following is an 88-amino-acid chain: Small ribosomal subunit protein bS16 (88 aa).

It belongs to the bacterial ribosomal protein bS16 family.

The protein is Small ribosomal subunit protein bS16 of Mycoplasma pneumoniae (strain ATCC 29342 / M129 / Subtype 1) (Mycoplasmoides pneumoniae).